The primary structure comprises 393 residues: ATP phosphoribosyltransferase regulatory subunit (393 aa).

It belongs to the class-II aminoacyl-tRNA synthetase family. HisZ subfamily. In terms of assembly, heteromultimer composed of HisG and HisZ subunits.

It is found in the cytoplasm. It functions in the pathway amino-acid biosynthesis; L-histidine biosynthesis; L-histidine from 5-phospho-alpha-D-ribose 1-diphosphate: step 1/9. Functionally, required for the first step of histidine biosynthesis. May allow the feedback regulation of ATP phosphoribosyltransferase activity by histidine. In Nitrosospira multiformis (strain ATCC 25196 / NCIMB 11849 / C 71), this protein is ATP phosphoribosyltransferase regulatory subunit.